The following is a 174-amino-acid chain: uncharacterized protein (174 aa).

A helical membrane pass occupies residues leucine 7–leucine 24.

The protein localises to the membrane. This is an uncharacterized protein from Methanocaldococcus jannaschii (strain ATCC 43067 / DSM 2661 / JAL-1 / JCM 10045 / NBRC 100440) (Methanococcus jannaschii).